Here is a 356-residue protein sequence, read N- to C-terminus: DNA polymerase IV (356 aa).

Positions 6–187 (IIHIDMDYFF…LDIGDFPGVG (182 aa)) constitute a UmuC domain. Positions 10 and 105 each coordinate Mg(2+). The active site involves Glu-106.

It belongs to the DNA polymerase type-Y family. In terms of assembly, monomer. Mg(2+) is required as a cofactor.

The protein resides in the cytoplasm. It catalyses the reaction DNA(n) + a 2'-deoxyribonucleoside 5'-triphosphate = DNA(n+1) + diphosphate. Functionally, poorly processive, error-prone DNA polymerase involved in untargeted mutagenesis. Copies undamaged DNA at stalled replication forks, which arise in vivo from mismatched or misaligned primer ends. These misaligned primers can be extended by PolIV. Exhibits no 3'-5' exonuclease (proofreading) activity. May be involved in translesional synthesis, in conjunction with the beta clamp from PolIII. This Staphylococcus aureus (strain Mu50 / ATCC 700699) protein is DNA polymerase IV.